The primary structure comprises 309 residues: MTAAHVAAPEPGQYELSHLRLLEAEAIHIIREVAAEFERPVLLFSGGKDSIVMLHLAIKAFAPARLPFPVMHVDTGHNFDEVIATRDRLVAENGVRLVVASVQEDIDAGRVVDNGPSRNPLQTVTLLRAIRENRFDAAFGGARRDEEKARAKERVFSFRDEFGQWDPKAQRPELWNIYNGRHRKGEHIRVFPLSNWTEYDIWAYIGAEGITLPGIYYAHTRPVFQRDGMLLAVHPYMQPRDDEEVFETSVRFRTVGDVTCTGCVESTASTVEDIIAETAVSRLTERGATRADDRISEAGMEDRKREGYF.

The protein belongs to the PAPS reductase family. CysD subfamily. Heterodimer composed of CysD, the smaller subunit, and CysN.

It catalyses the reaction sulfate + ATP + H(+) = adenosine 5'-phosphosulfate + diphosphate. It participates in sulfur metabolism; hydrogen sulfide biosynthesis; sulfite from sulfate: step 1/3. In terms of biological role, with CysN forms the ATP sulfurylase (ATPS) that catalyzes the adenylation of sulfate producing adenosine 5'-phosphosulfate (APS) and diphosphate, the first enzymatic step in sulfur assimilation pathway. APS synthesis involves the formation of a high-energy phosphoric-sulfuric acid anhydride bond driven by GTP hydrolysis by CysN coupled to ATP hydrolysis by CysD. The chain is Sulfate adenylyltransferase subunit 2 from Mycobacterium sp. (strain JLS).